Reading from the N-terminus, the 579-residue chain is Putative diflavin flavoprotein A 2 (579 aa).

A zinc metallo-hydrolase region spans residues 50-243 (QNGTTYNSYL…GKIKIIANGH (194 aa)). Residues H99, E101, D103, H166, D185, and H243 each contribute to the Fe cation site. The Flavodoxin-like domain maps to 272 to 460 (VGLFYVADYG…MLASWVSQAS (189 aa)). A flavodoxin-reductase-like region spans residues 461–579 (LQPLGFTIAV…VRHRKVGNYY (119 aa)).

In the N-terminal section; belongs to the zinc metallo-hydrolase group 3 family. This sequence in the C-terminal section; belongs to the flavodoxin reductase family. It depends on Fe cation as a cofactor.

Its function is as follows. Mediates electron transfer from NADH to oxygen, reducing it to water. This modular protein has 3 redox cofactors, in other organisms the same activity requires 2 or 3 proteins. This is Putative diflavin flavoprotein A 2 (dfa2) from Nostoc sp. (strain PCC 7120 / SAG 25.82 / UTEX 2576).